We begin with the raw amino-acid sequence, 330 residues long: ADP-L-glycero-D-manno-heptose-6-epimerase (330 aa).

NADP(+) contacts are provided by residues 11–12, 32–33, Lys-39, Lys-54, 75–79, and Asn-92; these read FI, DN, and EGACS. Tyr-139 serves as the catalytic Proton acceptor. Lys-143 lines the NADP(+) pocket. Asn-168 contributes to the substrate binding site. NADP(+) contacts are provided by Val-169 and Lys-177. Residue Lys-177 is the Proton acceptor of the active site. Residues Arg-179, His-186, 200–203, Arg-213, and Tyr-292 each bind substrate; that span reads FGEY.

It belongs to the NAD(P)-dependent epimerase/dehydratase family. HldD subfamily. In terms of assembly, homopentamer. NADP(+) is required as a cofactor.

It carries out the reaction ADP-D-glycero-beta-D-manno-heptose = ADP-L-glycero-beta-D-manno-heptose. Its pathway is nucleotide-sugar biosynthesis; ADP-L-glycero-beta-D-manno-heptose biosynthesis; ADP-L-glycero-beta-D-manno-heptose from D-glycero-beta-D-manno-heptose 7-phosphate: step 4/4. Its function is as follows. Catalyzes the interconversion between ADP-D-glycero-beta-D-manno-heptose and ADP-L-glycero-beta-D-manno-heptose via an epimerization at carbon 6 of the heptose. In Paraburkholderia phymatum (strain DSM 17167 / CIP 108236 / LMG 21445 / STM815) (Burkholderia phymatum), this protein is ADP-L-glycero-D-manno-heptose-6-epimerase.